The sequence spans 346 residues: Biotin synthase (346 aa).

One can recognise a Radical SAM core domain in the interval 38–256 (QQVQVSTLLS…IAVARIMMPT (219 aa)). Residues C53, C57, and C60 each coordinate [4Fe-4S] cluster. The [2Fe-2S] cluster site is built by C97, C128, C188, and R260.

Belongs to the radical SAM superfamily. Biotin synthase family. As to quaternary structure, homodimer. Requires [4Fe-4S] cluster as cofactor. The cofactor is [2Fe-2S] cluster.

It catalyses the reaction (4R,5S)-dethiobiotin + (sulfur carrier)-SH + 2 reduced [2Fe-2S]-[ferredoxin] + 2 S-adenosyl-L-methionine = (sulfur carrier)-H + biotin + 2 5'-deoxyadenosine + 2 L-methionine + 2 oxidized [2Fe-2S]-[ferredoxin]. It participates in cofactor biosynthesis; biotin biosynthesis; biotin from 7,8-diaminononanoate: step 2/2. Functionally, catalyzes the conversion of dethiobiotin (DTB) to biotin by the insertion of a sulfur atom into dethiobiotin via a radical-based mechanism. The chain is Biotin synthase from Salmonella choleraesuis (strain SC-B67).